Reading from the N-terminus, the 245-residue chain is tRNA1(Val) (adenine(37)-N6)-methyltransferase (245 aa).

The protein belongs to the methyltransferase superfamily. tRNA (adenine-N(6)-)-methyltransferase family.

Its subcellular location is the cytoplasm. The enzyme catalyses adenosine(37) in tRNA1(Val) + S-adenosyl-L-methionine = N(6)-methyladenosine(37) in tRNA1(Val) + S-adenosyl-L-homocysteine + H(+). In terms of biological role, specifically methylates the adenine in position 37 of tRNA(1)(Val) (anticodon cmo5UAC). This Klebsiella pneumoniae (strain 342) protein is tRNA1(Val) (adenine(37)-N6)-methyltransferase.